Reading from the N-terminus, the 118-residue chain is MASQSQGIQQLLQAEKRAAEKVADARKRKARRLKQAKEEAQMEVELYRREREQEFQSKQQAAMGSQGNLSAEVEQATRRQVQGMQSSQQRNRERVLAQLLGMVCDVRPQVHPNYRIAV.

Residue alanine 2 is modified to N-acetylalanine. The disordered stretch occupies residues 55–90; sequence FQSKQQAAMGSQGNLSAEVEQATRRQVQGMQSSQQR. Composition is skewed to polar residues over residues 56–69 and 78–89; these read QSKQ…QGNL and RRQVQGMQSSQQ.

The protein belongs to the V-ATPase G subunit family. As to quaternary structure, V-ATPase is a heteromultimeric enzyme made up of two complexes: the ATP-hydrolytic V1 complex and the proton translocation V0 complex. The V1 complex consists of three catalytic AB heterodimers that form a heterohexamer, three peripheral stalks each consisting of EG heterodimers, one central rotor including subunits D and F, and the regulatory subunits C and H. The proton translocation complex V0 consists of the proton transport subunit a, a ring of proteolipid subunits c9c'', rotary subunit d, subunits e and f, and the accessory subunits ATP6AP1/Ac45 and ATP6AP2/PRR.

The protein localises to the apical cell membrane. Functionally, subunit of the V1 complex of vacuolar(H+)-ATPase (V-ATPase), a multisubunit enzyme composed of a peripheral complex (V1) that hydrolyzes ATP and a membrane integral complex (V0) that translocates protons. V-ATPase is responsible for acidifying and maintaining the pH of intracellular compartments and in some cell types, is targeted to the plasma membrane, where it is responsible for acidifying the extracellular environment. In aerobic conditions, involved in intracellular iron homeostasis, thus triggering the activity of Fe(2+) prolyl hydroxylase (PHD) enzymes, and leading to HIF1A hydroxylation and subsequent proteasomal degradation. This Canis lupus familiaris (Dog) protein is V-type proton ATPase subunit G 1 (ATP6V1G1).